We begin with the raw amino-acid sequence, 400 residues long: Subtilisin-like protease 7 (400 aa).

An N-terminal signal peptide occupies residues 1 to 20 (MGFITKAIPLALAAASVING). Positions 21–119 (AEILETRAGV…IERDARVQIN (99 aa)) are excised as a propeptide. The region spanning 36–118 (KYIVVMNDGM…YIERDARVQI (83 aa)) is the Inhibitor I9 domain. The region spanning 129–400 (SWGLARVGSK…GKLINNGSGK (272 aa)) is the Peptidase S8 domain. Residues Asp-161 and His-192 each act as charge relay system in the active site. An N-linked (GlcNAc...) asparagine glycan is attached at Asn-252. Ser-346 (charge relay system) is an active-site residue. A glycan (N-linked (GlcNAc...) asparagine) is linked at Asn-396.

This sequence belongs to the peptidase S8 family.

It localises to the secreted. Secreted subtilisin-like serine protease with keratinolytic activity that contributes to pathogenicity. This is Subtilisin-like protease 7 (SUB7) from Arthroderma gypseum (strain ATCC MYA-4604 / CBS 118893) (Microsporum gypseum).